Here is a 355-residue protein sequence, read N- to C-terminus: 6-aminohexanoate-oligomer endohydrolase (355 aa).

The active-site Nucleophile is Thr-267.

Belongs to the peptidase S58 family. Heterotetramer composed of 4 alpha/beta heterodimers. Post-translationally, expressed as an inactive precursor that is cleaved autocatalytically at Asn266/Thr267 to generate an active enzyme composed of an alpha subunit and a beta subunit.

The catalysed reaction is [N-(6-aminohexanoyl)]n + H2O = [N-(6-aminohexanoyl)]n-x + [N-(6-aminohexanoyl)]x.. Its pathway is xenobiotic degradation; nylon-6 oligomer degradation. Functionally, involved in the degradation of nylon-6 oligomers. Degrades cyclic and linear oligomers of 6-aminohexanoate (Ahx) with a degree of polymerization greater than three by an endo-type mode. Cannot use Ahx cyclic dimer or the Ahx linear dimer. The sequence is that of 6-aminohexanoate-oligomer endohydrolase from Kocuria sp. (strain KY2).